A 201-amino-acid polypeptide reads, in one-letter code: Small ribosomal subunit protein uS4c (201 aa).

Residues 15–44 (LGALPGLTNKRPRAGSDLRNQSRSGKKSQY) form a disordered region. Residues 89–150 (MRLDNILFRL…EQKSKVLIQN (62 aa)) form the S4 RNA-binding domain.

Belongs to the universal ribosomal protein uS4 family. Part of the 30S ribosomal subunit. Contacts protein S5. The interaction surface between S4 and S5 is involved in control of translational fidelity.

It localises to the plastid. Its subcellular location is the chloroplast. Functionally, one of the primary rRNA binding proteins, it binds directly to 16S rRNA where it nucleates assembly of the body of the 30S subunit. In terms of biological role, with S5 and S12 plays an important role in translational accuracy. In Lactuca sativa (Garden lettuce), this protein is Small ribosomal subunit protein uS4c (rps4).